The sequence spans 151 residues: UPF0756 membrane protein Dred_1676 (151 aa).

4 helical membrane passes run Val-9–Val-29, Thr-47–Thr-67, Leu-75–Thr-95, and Ile-111–Val-131.

This sequence belongs to the UPF0756 family.

Its subcellular location is the cell membrane. This Desulforamulus reducens (strain ATCC BAA-1160 / DSM 100696 / MI-1) (Desulfotomaculum reducens) protein is UPF0756 membrane protein Dred_1676.